The chain runs to 456 residues: Shootin-1 (456 aa).

At Met1 the chain carries N-acetylmethionine. Phosphoserine is present on residues Ser3 and Ser4. A coiled-coil region spans residues 7 to 353; the sequence is EKQLQLITSL…RVNQSENSVP (347 aa). Ser101 and Ser249 each carry phosphoserine; by PAK1. 2 disordered regions span residues 343-405 and 418-445; these read KRVN…VTDL and KKGVHLRPVNQTARPKTKPESSKGCESA. Residues 352–369 are compositionally biased toward pro residues; the sequence is VPPPPPPPPPLPPPPPNP. Phosphoserine is present on Ser375.

The protein belongs to the shootin family. Interacts with L1CAM; this interaction occurs in axonal growth cones. Interacts with actin filament retrograde flow; this interaction is enhanced in a netrin-1- and PAK1-dependent manner and promotes F-actin-substrate coupling and concomitant formation of traction forces at axonal growth cones. Interacts with RUFY3. Interacts with PFN2. Interacts (via N-terminus) with KIF20B; this interaction is direct and promotes the association of SHTN1 to microtubules in primary neurons. Associates with microtubule. Phosphorylated on Ser-101 and Ser-249 by PAK1 through a CDC42- and RAC1-dependent signaling pathway, which enhances its association with F-actin retrograde flow in filopodia and lamellipodia of axonal growth cones. Phosphorylation on Ser-101 and Ser-249 is increased by netrin-1.

It is found in the perikaryon. Its subcellular location is the cell projection. It localises to the axon. The protein localises to the growth cone. The protein resides in the cytoplasm. It is found in the cytoskeleton. Its subcellular location is the filopodium. It localises to the lamellipodium. Its function is as follows. Involved in the generation of internal asymmetric signals required for neuronal polarization and neurite outgrowth. Mediates netrin-1-induced F-actin-substrate coupling or 'clutch engagement' within the axon growth cone through activation of CDC42, RAC1 and PAK1-dependent signaling pathway, thereby converting the F-actin retrograde flow into traction forces, concomitantly with filopodium extension and axon outgrowth. Plays a role in cytoskeletal organization by regulating the subcellular localization of phosphoinositide 3-kinase (PI3K) activity at the axonal growth cone. Also plays a role in regenerative neurite outgrowth. In the developing cortex, cooperates with KIF20B to promote both the transition from the multipolar to the bipolar stage and the radial migration of cortical neurons from the ventricular zone toward the superficial layer of the neocortex. Involved in the accumulation of phosphatidylinositol 3,4,5-trisphosphate (PIP3) in the growth cone of primary hippocampal neurons. This is Shootin-1 from Pongo abelii (Sumatran orangutan).